We begin with the raw amino-acid sequence, 471 residues long: tRNA(Ile)-lysidine synthase (471 aa).

27–32 (SGGPDS) provides a ligand contact to ATP.

It belongs to the tRNA(Ile)-lysidine synthase family.

It is found in the cytoplasm. The enzyme catalyses cytidine(34) in tRNA(Ile2) + L-lysine + ATP = lysidine(34) in tRNA(Ile2) + AMP + diphosphate + H(+). Ligates lysine onto the cytidine present at position 34 of the AUA codon-specific tRNA(Ile) that contains the anticodon CAU, in an ATP-dependent manner. Cytidine is converted to lysidine, thus changing the amino acid specificity of the tRNA from methionine to isoleucine. This Dehalococcoides mccartyi (strain CBDB1) protein is tRNA(Ile)-lysidine synthase.